The sequence spans 239 residues: UPF0173 metal-dependent hydrolase rrnAC0300 (239 aa).

It belongs to the UPF0173 family.

In Haloarcula marismortui (strain ATCC 43049 / DSM 3752 / JCM 8966 / VKM B-1809) (Halobacterium marismortui), this protein is UPF0173 metal-dependent hydrolase rrnAC0300.